The sequence spans 192 residues: 3-hydroxyanthranilate 3,4-dioxygenase 1 (192 aa).

Residue Arg50 participates in O2 binding. Fe cation is bound by residues His54, Glu60, and His102. Glu60 provides a ligand contact to substrate. Residues Arg106 and Glu116 each contribute to the substrate site. Cys131, Cys134, Cys168, and Cys171 together coordinate a divalent metal cation.

The protein belongs to the 3-HAO family. Fe(2+) is required as a cofactor.

It is found in the cytoplasm. The enzyme catalyses 3-hydroxyanthranilate + O2 = (2Z,4Z)-2-amino-3-carboxymuconate 6-semialdehyde. It participates in cofactor biosynthesis; NAD(+) biosynthesis; quinolinate from L-kynurenine: step 3/3. Catalyzes the oxidative ring opening of 3-hydroxyanthranilate to 2-amino-3-carboxymuconate semialdehyde, which spontaneously cyclizes to quinolinate. The chain is 3-hydroxyanthranilate 3,4-dioxygenase 1 (bna1-1) from Aspergillus fumigatus (strain CBS 144.89 / FGSC A1163 / CEA10) (Neosartorya fumigata).